A 145-amino-acid chain; its full sequence is 3-hydroxyacyl-[acyl-carrier-protein] dehydratase FabZ (145 aa).

H47 is a catalytic residue.

The protein belongs to the thioester dehydratase family. FabZ subfamily.

The protein resides in the cytoplasm. The catalysed reaction is a (3R)-hydroxyacyl-[ACP] = a (2E)-enoyl-[ACP] + H2O. Involved in unsaturated fatty acids biosynthesis. Catalyzes the dehydration of short chain beta-hydroxyacyl-ACPs and long chain saturated and unsaturated beta-hydroxyacyl-ACPs. This chain is 3-hydroxyacyl-[acyl-carrier-protein] dehydratase FabZ, found in Thiobacillus denitrificans (strain ATCC 25259 / T1).